Reading from the N-terminus, the 149-residue chain is MRYNERELLSLSRQPAEKAAEILMRVPKKGSVLKKRLVKLVVNFLFYFRTDEAEPIGALLLEHCRITKEEENVFSISFIEEPERKYCFECDSEEQCQEWIEALKRASYEFMRRSLIFYRNEIQKMTGKDPLEQFGISEEARFQLASHKQ.

One can recognise a PH domain in the interval 15–108 (PAEKAAEILM…WIEALKRASY (94 aa)).

This chain is Pleckstrin homology domain-containing family J member 1 (PLEKHJ1), found in Gallus gallus (Chicken).